A 126-amino-acid polypeptide reads, in one-letter code: Interleukin-18-binding protein (126 aa).

Positions 1 to 20 are cleaved as a signal peptide; the sequence is MRILFLIAFMYGCVHPYVNA.

The protein belongs to the orthopoxvirus OPG022 family.

It localises to the secreted. Functionally, soluble IL18-binding protein that may modulate the host antiviral response. This Bos taurus (Bovine) protein is Interleukin-18-binding protein (OPG022).